Reading from the N-terminus, the 267-residue chain is Small ribosomal subunit protein uS10m (267 aa).

The transit peptide at 1-10 directs the protein to the mitochondrion; that stretch reads MLSRILGVRN.

The protein belongs to the universal ribosomal protein uS10 family. In terms of assembly, part of the mitochondrial small ribosomal subunit.

Its subcellular location is the mitochondrion. Functionally, involved in mitochondrial genome encoded proteins translation. Involved in the binding of tRNA to the ribosomes. The chain is Small ribosomal subunit protein uS10m (RSM10) from Debaryomyces hansenii (strain ATCC 36239 / CBS 767 / BCRC 21394 / JCM 1990 / NBRC 0083 / IGC 2968) (Yeast).